Here is a 194-residue protein sequence, read N- to C-terminus: MFIPYVIEKSSRGERSYDIYSRLLKDRIIMLSGEIHDELAASIVAQLLFLEAEDPTKDIYLYINSPGGVITSGFSIYDTMNYIKPDVCTICIGQAASMGAFLLSCGAEGKRFALPNSRIMIHQPLGGARGQATDIEIQAKEILRLKTILNDILAKNTKQKVAKIAKDTERDFFMSAQEAKEYGLIDKVLEKSFK.

The active-site Nucleophile is the serine 97. Histidine 122 is an active-site residue.

Belongs to the peptidase S14 family. In terms of assembly, fourteen ClpP subunits assemble into 2 heptameric rings which stack back to back to give a disk-like structure with a central cavity, resembling the structure of eukaryotic proteasomes.

Its subcellular location is the cytoplasm. It catalyses the reaction Hydrolysis of proteins to small peptides in the presence of ATP and magnesium. alpha-casein is the usual test substrate. In the absence of ATP, only oligopeptides shorter than five residues are hydrolyzed (such as succinyl-Leu-Tyr-|-NHMec, and Leu-Tyr-Leu-|-Tyr-Trp, in which cleavage of the -Tyr-|-Leu- and -Tyr-|-Trp bonds also occurs).. Functionally, cleaves peptides in various proteins in a process that requires ATP hydrolysis. Has a chymotrypsin-like activity. Plays a major role in the degradation of misfolded proteins. The chain is ATP-dependent Clp protease proteolytic subunit from Campylobacter jejuni subsp. jejuni serotype O:6 (strain 81116 / NCTC 11828).